A 280-amino-acid chain; its full sequence is 4-diphosphocytidyl-2-C-methyl-D-erythritol kinase (280 aa).

Lysine 8 is a catalytic residue. 91 to 101 provides a ligand contact to ATP; the sequence is PVAAGLAGGST. Aspartate 133 is a catalytic residue.

Belongs to the GHMP kinase family. IspE subfamily.

It carries out the reaction 4-CDP-2-C-methyl-D-erythritol + ATP = 4-CDP-2-C-methyl-D-erythritol 2-phosphate + ADP + H(+). Its pathway is isoprenoid biosynthesis; isopentenyl diphosphate biosynthesis via DXP pathway; isopentenyl diphosphate from 1-deoxy-D-xylulose 5-phosphate: step 3/6. Functionally, catalyzes the phosphorylation of the position 2 hydroxy group of 4-diphosphocytidyl-2C-methyl-D-erythritol. In Clostridium botulinum (strain Loch Maree / Type A3), this protein is 4-diphosphocytidyl-2-C-methyl-D-erythritol kinase.